Consider the following 653-residue polypeptide: tRNA-guanine(15) transglycosylase (653 aa).

The active-site Nucleophile is the Asp91. Residues Asp126 and Ala193 each coordinate substrate. The Zn(2+) site is built by Cys276, Cys278, and Cys281. One can recognise a PUA domain in the interval 578-653; it reads AWRVAVNEES…QAVKTRKGGF (76 aa).

Belongs to the archaeosine tRNA-ribosyltransferase family. Requires Zn(2+) as cofactor.

The catalysed reaction is guanosine(15) in tRNA + 7-cyano-7-deazaguanine = 7-cyano-7-carbaguanosine(15) in tRNA + guanine. The protein operates within tRNA modification; archaeosine-tRNA biosynthesis. Functionally, exchanges the guanine residue with 7-cyano-7-deazaguanine (preQ0) at position 15 in the dihydrouridine loop (D-loop) of archaeal tRNAs. This is tRNA-guanine(15) transglycosylase from Methanothermobacter thermautotrophicus (strain ATCC 29096 / DSM 1053 / JCM 10044 / NBRC 100330 / Delta H) (Methanobacterium thermoautotrophicum).